The following is a 136-amino-acid chain: NLP effector protein 13 (136 aa).

Residues 1–9 (MYSWYFPKD) carry the Conserved undecapeptide motif I motif. The Hepta-peptide GHRHDWE motif II motif lies at 16–22 (GHRHDWE).

This sequence belongs to the Necrosis inducing protein (NPP1) family.

It localises to the secreted. Secreted effector that contributes moderately to virulence during infection by P.capsici. Causes only small yellow areas at 3 days after inoculation of host C.annuum leaves; these areas expand somewhat and became necrotic at 7 days after inoculation. Leads only to chlorotic areas, without necrosis at 7 days after non-host N.benthamiana leaves infection. The polypeptide is NLP effector protein 13 (Phytophthora capsici).